A 239-amino-acid chain; its full sequence is MNIEQFTAALEEKGITLSPVQLEQFETYFRMLVEWNEKMNLTSITEKEEVYLKHFYDSISASFFIDFHKVTTICDIGAGAGFPSIPLKICFPHLHVTIVDSLQKRITFLNELAKGLNLQDTTFYHDRAETFGQRKEKRESYDLVTARAVARLSVLSELCLPLVKKEGLFVALKASAADEEMQAGKKAVTVLGGEVVEKHSFVLPLEESERNIIVIEKKKQTPKKYPRKPGTPNKSPIEG.

S-adenosyl-L-methionine-binding positions include glycine 77, phenylalanine 82, 128 to 129 (AE), and arginine 147. Positions 216-239 (EKKKQTPKKYPRKPGTPNKSPIEG) are disordered.

Belongs to the methyltransferase superfamily. RNA methyltransferase RsmG family.

It is found in the cytoplasm. Functionally, specifically methylates the N7 position of guanine in position 535 of 16S rRNA. This chain is Ribosomal RNA small subunit methyltransferase G, found in Bacillus pumilus (strain SAFR-032).